The following is a 330-amino-acid chain: Deoxyhypusine hydroxylase (330 aa).

3 HEAT-like PBS-type repeats span residues 57-83 (LKHELAYCLGQIRNPLALPVLESVLRN), 90-116 (VRHEAAEAMGAISTADSIPILKQYLSD), and 199-225 (ERYRAMFALRNIGSPAAVDALAAGFSG). Positions 59, 60, 92, and 93 each coordinate Fe cation. Residues His232, Glu233, His265, and Glu266 each contribute to the Fe cation site. An HEAT-like PBS-type 4 repeat occupies 263 to 289 (VRHEAAEALGGIATPEVLPPLKEWVAR).

The protein belongs to the deoxyhypusine hydroxylase family. Fe(2+) is required as a cofactor.

It is found in the cytoplasm. Its subcellular location is the nucleus. The enzyme catalyses [eIF5A protein]-deoxyhypusine + AH2 + O2 = [eIF5A protein]-hypusine + A + H2O. Its pathway is protein modification; eIF5A hypusination. Catalyzes the hydroxylation of the N(6)-(4-aminobutyl)-L-lysine intermediate to form hypusine, an essential post-translational modification only found in mature eIF-5A factor. This Lentinula edodes (Shiitake mushroom) protein is Deoxyhypusine hydroxylase.